The chain runs to 94 residues: Putative pterin-4-alpha-carbinolamine dehydratase (94 aa).

This sequence belongs to the pterin-4-alpha-carbinolamine dehydratase family.

The enzyme catalyses (4aS,6R)-4a-hydroxy-L-erythro-5,6,7,8-tetrahydrobiopterin = (6R)-L-erythro-6,7-dihydrobiopterin + H2O. The sequence is that of Putative pterin-4-alpha-carbinolamine dehydratase from Mycobacterium leprae (strain Br4923).